We begin with the raw amino-acid sequence, 838 residues long: Leucine--tRNA ligase (838 aa).

Residues Pro-38–His-48 carry the 'HIGH' region motif. A 'KMSKS' region motif is present at residues Lys-608–Ser-612. Lys-611 serves as a coordination point for ATP.

The protein belongs to the class-I aminoacyl-tRNA synthetase family.

It localises to the cytoplasm. It catalyses the reaction tRNA(Leu) + L-leucine + ATP = L-leucyl-tRNA(Leu) + AMP + diphosphate. The chain is Leucine--tRNA ligase from Orientia tsutsugamushi (strain Boryong) (Rickettsia tsutsugamushi).